Here is a 332-residue protein sequence, read N- to C-terminus: Phosphate acyltransferase (332 aa).

The protein belongs to the PlsX family. As to quaternary structure, homodimer. Probably interacts with PlsY.

It localises to the cytoplasm. It carries out the reaction a fatty acyl-[ACP] + phosphate = an acyl phosphate + holo-[ACP]. The protein operates within lipid metabolism; phospholipid metabolism. Its function is as follows. Catalyzes the reversible formation of acyl-phosphate (acyl-PO(4)) from acyl-[acyl-carrier-protein] (acyl-ACP). This enzyme utilizes acyl-ACP as fatty acyl donor, but not acyl-CoA. The polypeptide is Phosphate acyltransferase (Streptococcus sanguinis (strain SK36)).